Consider the following 194-residue polypeptide: MDEDGLPLMGSGIDLTKVPAIQQKRTVAFLNQFVVHTVQFLNRFSTVCEEKLADLSLRIQQIETTLNILDAKLSSIPGLDDVTFEVSPVNVTRITNGTHSEATSEQSQQNSLQDSGPQESEVTPENILTVAKDPRYARYHKMVQVGVPVMAIRNKMISEGLDPDLLERPDAPVPDGEGEKNTEESSDSESSFSD.

Residue Met1 is modified to N-acetylmethionine. The stretch at 46 to 74 forms a coiled coil; the sequence is TVCEEKLADLSLRIQQIETTLNILDAKLS. The segment covering 98 to 123 has biased composition (polar residues); that stretch reads THSEATSEQSQQNSLQDSGPQESEVT. Disordered stretches follow at residues 98-125 and 158-194; these read THSEATSEQSQQNSLQDSGPQESEVTPE and SEGLDPDLLERPDAPVPDGEGEKNTEESSDSESSFSD.

The protein belongs to the CCDC53 family. In terms of assembly, component of the WASH core complex also described as WASH regulatory complex (SHRC) composed of WASHC1, WASHC2, WASHC3, WASHC4 and WASHC5. The WASH core complex associates via WASHC2 with the F-actin-capping protein dimer (formed by CAPZA1, CAPZA2 or CAPZA3 and CAPZB) in a transient or substoichiometric manner which was initially described as WASH complex.

It is found in the early endosome. Functionally, acts as a component of the WASH core complex that functions as a nucleation-promoting factor (NPF) at the surface of endosomes, where it recruits and activates the Arp2/3 complex to induce actin polymerization, playing a key role in the fission of tubules that serve as transport intermediates during endosome sorting. This Bos taurus (Bovine) protein is WASH complex subunit 3.